A 1088-amino-acid polypeptide reads, in one-letter code: RNA-directed RNA polymerase (1088 aa).

Positions 501-687 (LSYGDVTRFL…AKRYIAGGKI (187 aa)) constitute a RdRp catalytic domain.

The protein belongs to the reoviridae RNA-directed RNA polymerase family. In terms of assembly, interacts with VP3 (Potential). Interacts with VP2; this interaction activates VP1. Interacts with NSP5; this interaction is probably necessary for the formation of functional virus factories. Interacts with NSP2; this interaction is weak. It depends on Mg(2+) as a cofactor.

The protein localises to the virion. The catalysed reaction is RNA(n) + a ribonucleoside 5'-triphosphate = RNA(n+1) + diphosphate. Functionally, RNA-directed RNA polymerase that is involved in both transcription and genome replication. Together with VP3 capping enzyme, forms an enzyme complex positioned near the channels situated at each of the five-fold vertices of the core. Following infection, the outermost layer of the virus is lost, leaving a double-layered particle (DLP) made up of the core and VP6 shell. VP1 then catalyzes the transcription of fully conservative plus-strand genomic RNAs that are extruded through the DLP's channels into the cytoplasm where they function as mRNAs for translation of viral proteins. One copy of each of the viral (+)RNAs is also recruited during core assembly, together with newly synthesized polymerase complexes and VP2. The polymerase of these novo-formed particles catalyzes the synthesis of complementary minus-strands leading to dsRNA formation. To do so, the polymerase specifically recognizes and binds 4 bases 5'-UGUG-3' in the conserved 3'-sequence of plus-strand RNA templates. VP2 presumably activates the autoinhibited VP1-RNA complex to coordinate packaging and genome replication. Once dsRNA synthesis is complete, the polymerase switches to the transcriptional mode, thus providing secondary transcription. This is RNA-directed RNA polymerase from Sus scrofa (Pig).